The chain runs to 412 residues: DNA replication and repair protein RecF (412 aa).

Residue 30–37 (GKNGLGKT) participates in ATP binding.

It belongs to the RecF family.

It is found in the cytoplasm. Its function is as follows. The RecF protein is involved in DNA metabolism; it is required for DNA replication and normal SOS inducibility. RecF binds preferentially to single-stranded, linear DNA. It also seems to bind ATP. This chain is DNA replication and repair protein RecF, found in Bifidobacterium longum subsp. infantis (strain ATCC 15697 / DSM 20088 / JCM 1222 / NCTC 11817 / S12).